Consider the following 127-residue polypeptide: Small ribosomal subunit protein uS11 (127 aa).

The protein belongs to the universal ribosomal protein uS11 family. Part of the 30S ribosomal subunit. Interacts with proteins S7 and S18. Binds to IF-3.

Located on the platform of the 30S subunit, it bridges several disparate RNA helices of the 16S rRNA. Forms part of the Shine-Dalgarno cleft in the 70S ribosome. In Flavobacterium psychrophilum (strain ATCC 49511 / DSM 21280 / CIP 103535 / JIP02/86), this protein is Small ribosomal subunit protein uS11.